The following is a 277-amino-acid chain: GATA transcription factor 15 (277 aa).

The tract at residues 52–94 is disordered; it reads AYDDHSTVTTSPSSPSSSSTGSVDCTLSLGTPSSRRAEPVAAA. Residues 58–74 are compositionally biased toward low complexity; it reads TVTTSPSSPSSSSTGSV. Residues 154–179 form a GATA-type zinc finger; sequence CANCGTASTPLWRNGPRGPKSLCNAC.

This sequence belongs to the type IV zinc-finger family. Class B subfamily.

In terms of biological role, probable transcription factor that regulates organogenesis during transition from the vegetative to the reproductive phase. Regulates the expression of CYP78A11/PLA1, HD3A and MADS1 during reproductive development in rice. May act upstream of CYP78A11/PLA1 during panicle development. Acts independently of the photoperiodic and gibberellin signaling pathways. The chain is GATA transcription factor 15 from Oryza sativa subsp. indica (Rice).